The sequence spans 325 residues: Probable pectate lyase B (325 aa).

Positions 1 to 15 (MRLPTLFMLAAIATA) are cleaved as a signal peptide. 3 residues coordinate Ca(2+): Asp132, Asp161, and Asp165. Arg218 is an active-site residue.

Belongs to the polysaccharide lyase 1 family. It depends on Ca(2+) as a cofactor.

It is found in the secreted. It carries out the reaction Eliminative cleavage of (1-&gt;4)-alpha-D-galacturonan to give oligosaccharides with 4-deoxy-alpha-D-galact-4-enuronosyl groups at their non-reducing ends.. Its function is as follows. Pectinolytic enzyme consist of four classes of enzymes: pectin lyase, polygalacturonase, pectin methylesterase and rhamnogalacturonase. Among pectinolytic enzymes, pectin lyase is the most important in depolymerization of pectin, since it cleaves internal glycosidic bonds of highly methylated pectins. Favors pectate, the anion, over pectin, the methyl ester. The sequence is that of Probable pectate lyase B (plyB) from Aspergillus terreus (strain NIH 2624 / FGSC A1156).